The primary structure comprises 353 residues: Rhodopsin (353 aa).

At M1–A36 the chain is on the extracellular side. Residues N2 and N15 are each glycosylated (N-linked (GlcNAc...) asparagine). The chain crosses the membrane as a helical span at residues Y37 to V61. The Cytoplasmic segment spans residues T62–N73. The chain crosses the membrane as a helical span at residues Y74–Y96. Residues T97–C110 lie on the Extracellular side of the membrane. Residues C110 and C187 are joined by a disulfide bond. A helical transmembrane segment spans residues N111–V133. Positions E134–W136 match the 'Ionic lock' involved in activated form stabilization motif. Residues E134–H152 are Cytoplasmic-facing. The chain crosses the membrane as a helical span at residues A153–V173. Topologically, residues G174–S202 are extracellular. Residue N200 is glycosylated (N-linked (GlcNAc...) asparagine). The chain crosses the membrane as a helical span at residues F203–G224. Over R225–R252 the chain is Cytoplasmic. Residues M253–Y274 form a helical membrane-spanning segment. Topologically, residues I275–L286 are extracellular. A helical transmembrane segment spans residues F287–C308. At K296 the chain carries N6-(retinylidene)lysine. Topologically, residues M309–A353 are cytoplasmic. S-palmitoyl cysteine attachment occurs at residues C322 and C323. The tract at residues E329–A353 is disordered. The span at A334–A353 shows a compositional bias: low complexity.

It belongs to the G-protein coupled receptor 1 family. Opsin subfamily. In terms of processing, phosphorylated on some or all of the serine and threonine residues present in the C-terminal region. Contains one covalently linked retinal chromophore.

The protein resides in the membrane. It is found in the cell projection. Its subcellular location is the cilium. The protein localises to the photoreceptor outer segment. In terms of biological role, photoreceptor required for image-forming vision at low light intensity. While most salt water fish species use retinal as chromophore, most freshwater fish use 3-dehydroretinal, or a mixture of retinal and 3-dehydroretinal. Light-induced isomerization of 11-cis to all-trans retinal triggers a conformational change that activates signaling via G-proteins. Subsequent receptor phosphorylation mediates displacement of the bound G-protein alpha subunit by arrestin and terminates signaling. The protein is Rhodopsin (rho) of Chelon auratus (Golden grey mullet).